Consider the following 226-residue polypeptide: ATP synthase subunit a (226 aa).

Helical transmembrane passes span 17 to 37 (FSYF…AMMA), 79 to 99 (LVAT…IPGF), 105 to 125 (SLNL…FEGI), 134 to 154 (FAHF…IEIV), 176 to 196 (LFLM…AYVL), and 199 to 219 (FMAF…LAGA).

It belongs to the ATPase A chain family. As to quaternary structure, F-type ATPases have 2 components, CF(1) - the catalytic core - and CF(0) - the membrane proton channel. CF(1) has five subunits: alpha(3), beta(3), gamma(1), delta(1), epsilon(1). CF(0) has three main subunits: a(1), b(2) and c(9-12). The alpha and beta chains form an alternating ring which encloses part of the gamma chain. CF(1) is attached to CF(0) by a central stalk formed by the gamma and epsilon chains, while a peripheral stalk is formed by the delta and b chains.

The protein localises to the cell inner membrane. In terms of biological role, key component of the proton channel; it plays a direct role in the translocation of protons across the membrane. The chain is ATP synthase subunit a from Campylobacter jejuni subsp. jejuni serotype O:6 (strain 81116 / NCTC 11828).